Here is a 465-residue protein sequence, read N- to C-terminus: Methionine aminopeptidase 2-2 (465 aa).

The segment covering 1–13 (MGSKTPNDHRRGP) has biased composition (basic and acidic residues). The tract at residues 1–92 (MGSKTPNDHR…KKKTLLGGLQ (92 aa)) is disordered. Residues 44 to 55 (GETEDGEDEDDD) are compositionally biased toward acidic residues. A compositionally biased stretch (basic residues) spans 71 to 86 (TKKKNKRKKNKKKKKT). Residue H217 participates in substrate binding. The a divalent metal cation site is built by D238, D249, and H318. Substrate is bound at residue H326. A divalent metal cation is bound by residues E351 and E446.

The protein belongs to the peptidase M24A family. Methionine aminopeptidase eukaryotic type 2 subfamily. Co(2+) serves as cofactor. Requires Zn(2+) as cofactor. Mn(2+) is required as a cofactor. It depends on Fe(2+) as a cofactor.

The protein localises to the cytoplasm. The catalysed reaction is Release of N-terminal amino acids, preferentially methionine, from peptides and arylamides.. In terms of biological role, cotranslationally removes the N-terminal methionine from nascent proteins. The N-terminal methionine is often cleaved when the second residue in the primary sequence is small and uncharged (Met-Ala-, Cys, Gly, Pro, Ser, Thr, or Val). The chain is Methionine aminopeptidase 2-2 from Ajellomyces dermatitidis (strain ER-3 / ATCC MYA-2586) (Blastomyces dermatitidis).